The sequence spans 280 residues: 30 kDa immediate-early protein 2 (280 aa).

Residues 36–164 (SEEEQGEEVE…KKSKRISELD (129 aa)) form a disordered region. Low complexity-rich tracts occupy residues 47 to 67 (RGATASSPSTGSGTPRVTSPT), 90 to 101 (SSSSSSCSSASD), and 132 to 147 (AASSSLLSCGHQSSGG).

Activates the E1.7 promoter. This activation is augmented by the IE1 protein. It down-regulates the transcription of genes under the control of the major IE promoter. This Human cytomegalovirus (strain Towne) (HHV-5) protein is 30 kDa immediate-early protein 2 (UL122).